Consider the following 326-residue polypeptide: Sucrose operon repressor (326 aa).

The 57-residue stretch at 1-57 (MKPKLNDVAKLAGVSATTVSRVINNHGYLSSQTKEKVFAAMRELHYQPNNMARSLQG) folds into the HTH lacI-type domain. Residues 5–24 (LNDVAKLAGVSATTVSRVIN) constitute a DNA-binding region (H-T-H motif).

Negative regulator of scrB expression. This is Sucrose operon repressor (scrR) from Pediococcus pentosaceus.